The primary structure comprises 279 residues: Energy-coupling factor transporter ATP-binding protein EcfA1 (279 aa).

Residues 6–240 (ISVDHLTYQY…GTQLVEMGLD (235 aa)) form the ABC transporter domain. 40–47 (GHNGSGKS) serves as a coordination point for ATP.

Belongs to the ABC transporter superfamily. Energy-coupling factor EcfA family. In terms of assembly, forms a stable energy-coupling factor (ECF) transporter complex composed of 2 membrane-embedded substrate-binding proteins (S component), 2 ATP-binding proteins (A component) and 2 transmembrane proteins (T component).

Its subcellular location is the cell membrane. Functionally, ATP-binding (A) component of a common energy-coupling factor (ECF) ABC-transporter complex. Unlike classic ABC transporters this ECF transporter provides the energy necessary to transport a number of different substrates. The polypeptide is Energy-coupling factor transporter ATP-binding protein EcfA1 (Levilactobacillus brevis (strain ATCC 367 / BCRC 12310 / CIP 105137 / JCM 1170 / LMG 11437 / NCIMB 947 / NCTC 947) (Lactobacillus brevis)).